The following is a 793-amino-acid chain: Probable phosphoketolase (793 aa).

Belongs to the XFP family. Requires thiamine diphosphate as cofactor.

The sequence is that of Probable phosphoketolase from Streptomyces avermitilis (strain ATCC 31267 / DSM 46492 / JCM 5070 / NBRC 14893 / NCIMB 12804 / NRRL 8165 / MA-4680).